We begin with the raw amino-acid sequence, 577 residues long: Arginine--tRNA ligase (577 aa).

The 'HIGH' region signature appears at 122-132 (PNVAKEMHVGH).

It belongs to the class-I aminoacyl-tRNA synthetase family. As to quaternary structure, monomer.

The protein resides in the cytoplasm. The catalysed reaction is tRNA(Arg) + L-arginine + ATP = L-arginyl-tRNA(Arg) + AMP + diphosphate. This Salmonella gallinarum (strain 287/91 / NCTC 13346) protein is Arginine--tRNA ligase.